Reading from the N-terminus, the 199-residue chain is Protein GrpE (199 aa).

Over residues 1-10 (MTNQTEKEQV) the composition is skewed to basic and acidic residues. The disordered stretch occupies residues 1 to 44 (MTNQTEKEQVEQDVSQATELAQEAQEAQTQDVEPELQQNNEIDP). The span at 16–30 (QATELAQEAQEAQTQ) shows a compositional bias: low complexity.

This sequence belongs to the GrpE family. As to quaternary structure, homodimer.

Its subcellular location is the cytoplasm. Participates actively in the response to hyperosmotic and heat shock by preventing the aggregation of stress-denatured proteins, in association with DnaK and GrpE. It is the nucleotide exchange factor for DnaK and may function as a thermosensor. Unfolded proteins bind initially to DnaJ; upon interaction with the DnaJ-bound protein, DnaK hydrolyzes its bound ATP, resulting in the formation of a stable complex. GrpE releases ADP from DnaK; ATP binding to DnaK triggers the release of the substrate protein, thus completing the reaction cycle. Several rounds of ATP-dependent interactions between DnaJ, DnaK and GrpE are required for fully efficient folding. This chain is Protein GrpE, found in Glaesserella parasuis serovar 5 (strain SH0165) (Haemophilus parasuis).